The primary structure comprises 221 residues: Woronin body major protein (221 aa).

Positions 219-221 (SRL) match the Microbody targeting signal motif.

This sequence belongs to the eIF-5A family. Hex1 subfamily. Forms oligomers. Self-assembles into hexagonal rods.

Its subcellular location is the cell septum. Functionally, major component of Woronin bodies, fungal-specific organelles that occlude septal pores in order to separate intact from damaged compartments. Hex1 binds directly or indirectly to the Woronin body tether that in turn is anchored at the rim of the septal pore. The protein is Woronin body major protein of Emericella nidulans (strain FGSC A4 / ATCC 38163 / CBS 112.46 / NRRL 194 / M139) (Aspergillus nidulans).